The sequence spans 448 residues: Maintenance of mitochondrial morphology protein 1 (448 aa).

Residues 1–74 (MTESVIYSGT…LNHTWSFTQG (74 aa)) lie on the Lumenal side of the membrane. Residues 75 to 95 (LVVGQLSVIVVVAIFIKFFVF) form a helical membrane-spanning segment. At 96 to 448 (ADSSATTTTT…IVDKTEEASI (353 aa)) the chain is on the cytoplasmic side. 2 disordered regions span residues 119-144 (RNKN…LNSP) and 303-357 (LQNV…SQED). Residues 127–140 (SNEDKDPNNNKEDD) show a composition bias toward basic and acidic residues. In terms of domain architecture, SMP-LTD spans 164-419 (SPESLDWFNV…EPRFQVVKVP (256 aa)). Residues 313-332 (PSNEPNSQNQTQQPTPVNNS) are compositionally biased toward low complexity. The segment covering 345 to 356 (ETKHSKAKRSQE) has biased composition (basic and acidic residues).

It belongs to the MMM1 family. Homodimer. Component of the ER-mitochondria encounter structure (ERMES) or MDM complex, composed of MMM1, MDM10, MDM12 and MDM34. An MMM1 homodimer associates with one molecule of MDM12 on each side in a pairwise head-to-tail manner, and the SMP-LTD domains of MMM1 and MDM12 generate a continuous hydrophobic tunnel for phospholipid trafficking.

Its subcellular location is the endoplasmic reticulum membrane. In terms of biological role, component of the ERMES/MDM complex, which serves as a molecular tether to connect the endoplasmic reticulum (ER) and mitochondria. Components of this complex are involved in the control of mitochondrial shape and protein biogenesis, and function in nonvesicular lipid trafficking between the ER and mitochondria. The MDM12-MMM1 subcomplex functions in the major beta-barrel assembly pathway that is responsible for biogenesis of all outer membrane beta-barrel proteins, and acts in a late step after the SAM complex. The MDM10-MDM12-MMM1 subcomplex further acts in the TOM40-specific pathway after the action of the MDM12-MMM1 complex. Essential for establishing and maintaining the structure of mitochondria and maintenance of mtDNA nucleoids. This Debaryomyces hansenii (strain ATCC 36239 / CBS 767 / BCRC 21394 / JCM 1990 / NBRC 0083 / IGC 2968) (Yeast) protein is Maintenance of mitochondrial morphology protein 1.